Here is a 132-residue protein sequence, read N- to C-terminus: T-cell receptor alpha chain V region CTL-F3 (132 aa).

Residues 1–22 (MNMRPDTCSVLVLLLMLRRNNG) form the signal peptide. The segment at 23–114 (DSVTQTEGLV…DSALYYCALS (92 aa)) is v segment. N-linked (GlcNAc...) asparagine glycosylation occurs at N43. A disulfide bond links C44 and C111. The tract at residues 115-132 (NAGAKLTFGGGTRLTVRP) is j segment.

The polypeptide is T-cell receptor alpha chain V region CTL-F3 (Mus musculus (Mouse)).